Here is a 433-residue protein sequence, read N- to C-terminus: Small ribosomal subunit biogenesis GTPase RsgA 1, mitochondrial (433 aa).

Positions 1–20 (MLRAKHIGKNYSSSLSPVLS) are disordered. Residues 113–291 (SEILDPPVAN…LADTPGFNQP (179 aa)) form the CP-type G domain. 212–220 (GPSGVGKSS) is a GTP binding site. Residues C317, C322, H324, and C330 each coordinate Zn(2+).

It belongs to the TRAFAC class YlqF/YawG GTPase family. RsgA subfamily. Monomer. Associates with 30S ribosomal subunit, binds 16S rRNA. Zn(2+) is required as a cofactor.

It is found in the mitochondrion. Its function is as follows. One of several proteins that assist in the late maturation steps of the functional core of the 30S ribosomal subunit. Helps release RbfA from mature subunits. May play a role in the assembly of ribosomal proteins into the subunit. Circularly permuted GTPase that catalyzes slow GTP hydrolysis, GTPase activity is stimulated by the 30S ribosomal subunit. Required for embryo development. In Arabidopsis thaliana (Mouse-ear cress), this protein is Small ribosomal subunit biogenesis GTPase RsgA 1, mitochondrial.